Reading from the N-terminus, the 278-residue chain is Adenosylcobinamide-GDP ribazoletransferase (278 aa).

The next 6 membrane-spanning stretches (helical) occupy residues 44-64 (GIGV…QLLL), 69-89 (FTPL…TGGF), 121-141 (AFGA…LALL), 161-181 (VCAA…VMIW), 204-224 (GGLA…SLAL), and 227-247 (INLI…LRFF).

Belongs to the CobS family. It depends on Mg(2+) as a cofactor.

The protein resides in the cell inner membrane. It carries out the reaction alpha-ribazole + adenosylcob(III)inamide-GDP = adenosylcob(III)alamin + GMP + H(+). The catalysed reaction is alpha-ribazole 5'-phosphate + adenosylcob(III)inamide-GDP = adenosylcob(III)alamin 5'-phosphate + GMP + H(+). It functions in the pathway cofactor biosynthesis; adenosylcobalamin biosynthesis; adenosylcobalamin from cob(II)yrinate a,c-diamide: step 7/7. In terms of biological role, joins adenosylcobinamide-GDP and alpha-ribazole to generate adenosylcobalamin (Ado-cobalamin). Also synthesizes adenosylcobalamin 5'-phosphate from adenosylcobinamide-GDP and alpha-ribazole 5'-phosphate. This is Adenosylcobinamide-GDP ribazoletransferase from Polaromonas naphthalenivorans (strain CJ2).